We begin with the raw amino-acid sequence, 505 residues long: TBC1 domain family member 22B (505 aa).

Alanine 2 is modified (N-acetylalanine). A phosphoserine mark is found at serine 58 and serine 116. Positions 105–146 (SKLRVKPERSQSTTSDVPANYKVIKSSSDAQLSRNSSDTCLR) are disordered. Positions 129 to 146 (KSSSDAQLSRNSSDTCLR) are enriched in polar residues. Serine 154 is modified (phosphoserine). In terms of domain architecture, Rab-GAP TBC spans 210 to 434 (GVPREVRPVT…RLWDTYQSEP (225 aa)).

Interacts with ACBD3 and ARFGEF1. Interacts with YWHAB, YWHAE, YWHAG, YWHAH, YWHAQ and YWHAZ.

In terms of biological role, may act as a GTPase-activating protein for Rab family protein(s). The polypeptide is TBC1 domain family member 22B (TBC1D22B) (Macaca fascicularis (Crab-eating macaque)).